We begin with the raw amino-acid sequence, 292 residues long: Selenate reductase subunit B (292 aa).

Residues 1 to 43 (MGSKETKNTSRRDFLIKGAGAAALGAGAFAISQVPLLEKLASA) constitute a signal peptide (tat-type signal). 4Fe-4S ferredoxin-type domains follow at residues 84–113 (WIMV…PPGV), 129–160 (VTKK…KSED), and 161–190 (GIVA…FDWG). Positions 93, 96, 99, 103, 138, 141, 146, 150, 170, 173, 176, 180, 230, 233, 245, and 249 each coordinate [4Fe-4S] cluster.

In terms of assembly, the complex is composed of three subunits: SrdA, SrdB and SrdC. It depends on [4Fe-4S] cluster as a cofactor. In terms of processing, predicted to be exported by the Tat system. The position of the signal peptide cleavage has not been experimentally proven.

The protein localises to the secreted. It catalyses the reaction selenite + a quinone + H2O = selenate + a quinol. Functionally, component of the respiratory selenate reductase complex, which catalyzes the reduction of selenate to selenite. This subunit probably transfers electrons from SrdC to SrdA. The chain is Selenate reductase subunit B from Mesobacillus selenatarsenatis (strain DSM 18680 / JCM 14380 / FERM P-15431 / SF-1).